Consider the following 335-residue polypeptide: Zinc-type alcohol dehydrogenase-like protein SAV2186 (335 aa).

This sequence belongs to the zinc-containing alcohol dehydrogenase family. Quinone oxidoreductase subfamily.

This is Zinc-type alcohol dehydrogenase-like protein SAV2186 from Staphylococcus aureus (strain Mu50 / ATCC 700699).